A 237-amino-acid polypeptide reads, in one-letter code: Phosphoribosylaminoimidazole-succinocarboxamide synthase (237 aa).

The protein belongs to the SAICAR synthetase family.

It carries out the reaction 5-amino-1-(5-phospho-D-ribosyl)imidazole-4-carboxylate + L-aspartate + ATP = (2S)-2-[5-amino-1-(5-phospho-beta-D-ribosyl)imidazole-4-carboxamido]succinate + ADP + phosphate + 2 H(+). The protein operates within purine metabolism; IMP biosynthesis via de novo pathway; 5-amino-1-(5-phospho-D-ribosyl)imidazole-4-carboxamide from 5-amino-1-(5-phospho-D-ribosyl)imidazole-4-carboxylate: step 1/2. In Escherichia coli O127:H6 (strain E2348/69 / EPEC), this protein is Phosphoribosylaminoimidazole-succinocarboxamide synthase.